The following is a 291-amino-acid chain: UDP-N-acetylenolpyruvoylglucosamine reductase (291 aa).

The region spanning 22-187 is the FAD-binding PCMH-type domain; it reads RIGGPARYFK…ASATFQLTKD (166 aa). Arg-166 is an active-site residue. Residue Cys-214 is the Proton donor of the active site. Glu-283 is a catalytic residue.

This sequence belongs to the MurB family. FAD serves as cofactor.

The protein localises to the cytoplasm. It carries out the reaction UDP-N-acetyl-alpha-D-muramate + NADP(+) = UDP-N-acetyl-3-O-(1-carboxyvinyl)-alpha-D-glucosamine + NADPH + H(+). The protein operates within cell wall biogenesis; peptidoglycan biosynthesis. In terms of biological role, cell wall formation. In Chlamydia trachomatis serovar L2 (strain ATCC VR-902B / DSM 19102 / 434/Bu), this protein is UDP-N-acetylenolpyruvoylglucosamine reductase.